The chain runs to 234 residues: Sugar fermentation stimulation protein homolog (234 aa).

It belongs to the SfsA family.

The polypeptide is Sugar fermentation stimulation protein homolog (Shewanella pealeana (strain ATCC 700345 / ANG-SQ1)).